A 310-amino-acid polypeptide reads, in one-letter code: Lipoyl synthase (310 aa).

The [4Fe-4S] cluster site is built by Cys51, Cys56, Cys62, Cys77, Cys81, Cys84, and Ser290. One can recognise a Radical SAM core domain in the interval 63 to 280 (WSRKTATYLA…RRVGESLGLF (218 aa)).

Belongs to the radical SAM superfamily. Lipoyl synthase family. Requires [4Fe-4S] cluster as cofactor.

It localises to the cytoplasm. It carries out the reaction [[Fe-S] cluster scaffold protein carrying a second [4Fe-4S](2+) cluster] + N(6)-octanoyl-L-lysyl-[protein] + 2 oxidized [2Fe-2S]-[ferredoxin] + 2 S-adenosyl-L-methionine + 4 H(+) = [[Fe-S] cluster scaffold protein] + N(6)-[(R)-dihydrolipoyl]-L-lysyl-[protein] + 4 Fe(3+) + 2 hydrogen sulfide + 2 5'-deoxyadenosine + 2 L-methionine + 2 reduced [2Fe-2S]-[ferredoxin]. It participates in protein modification; protein lipoylation via endogenous pathway; protein N(6)-(lipoyl)lysine from octanoyl-[acyl-carrier-protein]: step 2/2. In terms of biological role, catalyzes the radical-mediated insertion of two sulfur atoms into the C-6 and C-8 positions of the octanoyl moiety bound to the lipoyl domains of lipoate-dependent enzymes, thereby converting the octanoylated domains into lipoylated derivatives. The sequence is that of Lipoyl synthase from Chlamydia abortus (strain DSM 27085 / S26/3) (Chlamydophila abortus).